The sequence spans 338 residues: Anthranilate phosphoribosyltransferase (338 aa).

5-phospho-alpha-D-ribose 1-diphosphate contacts are provided by residues Gly78, Gly81–Asp82, Thr86, Asn88–Thr91, Lys106–Ser114, and Ser118. Gly78 lines the anthranilate pocket. Ser90 provides a ligand contact to Mg(2+). Anthranilate is bound at residue Asn109. Residue Arg164 participates in anthranilate binding. Residues Asp223 and Glu224 each coordinate Mg(2+).

Belongs to the anthranilate phosphoribosyltransferase family. As to quaternary structure, homodimer. The cofactor is Mg(2+).

It carries out the reaction N-(5-phospho-beta-D-ribosyl)anthranilate + diphosphate = 5-phospho-alpha-D-ribose 1-diphosphate + anthranilate. It functions in the pathway amino-acid biosynthesis; L-tryptophan biosynthesis; L-tryptophan from chorismate: step 2/5. Functionally, catalyzes the transfer of the phosphoribosyl group of 5-phosphorylribose-1-pyrophosphate (PRPP) to anthranilate to yield N-(5'-phosphoribosyl)-anthranilate (PRA). This Bacillus licheniformis (strain ATCC 14580 / DSM 13 / JCM 2505 / CCUG 7422 / NBRC 12200 / NCIMB 9375 / NCTC 10341 / NRRL NRS-1264 / Gibson 46) protein is Anthranilate phosphoribosyltransferase.